A 1023-amino-acid chain; its full sequence is NRPS-like oxidoreductase fscA (1023 aa).

The segment at 54-454 (TYGDLNGMAT…NHPFVRQCMV (401 aa)) is adenylation. The Carrier domain maps to 554–637 (PEDDVIGRQI…SIANHVRSAQ (84 aa)). S596 carries the O-(pantetheine 4'-phosphoryl)serine modification. Positions 685 to 901 (LTGGAGYLGQ…VYDESTTRAR (217 aa)) constitute a Thioester reductase (TE) domain.

This sequence belongs to the NRP synthetase family. It depends on pantetheine 4'-phosphate as a cofactor.

The protein operates within secondary metabolite biosynthesis. Its function is as follows. NRPS-like oxidoreductasee; part of the fragmented gene cluster that mediates the biosynthesis of fusarochromene, a tryptophan-derived metabolite closely related to a group of mycotoxins including fusarochromanone. Within the pathway, fscA acts as an oxidoreductase that reduces the carboxyl group of 4-hydroxykyrunenine to primary alcohol. The first step of the pathway is the epimerization of L-tryptophan to D-tryptophan in the presence of the NRPS-like tryptophan epimerase fscC. D-tryptophan is subsequently hydroxylated by the tryptophan 6-hydroxylase fscE to yield 6-hydroxytryptophan. The pyrrole ring undergoes cleavaged by the tryptophan 2,3-dioxygenase fscD and is finally converted to 4-hydroxykyrunenine by the hydrolase fscH. The NRPS-like oxidoreductase fscA reduces the carboxyl group to primary alcohol and the DMATS-type prenyltransferase fscG performs prenylation, followed by the formation of a chromene ring catalyzed by the oxidoreductase fscI, which leads to desacetylfusarochromene. Epoxidation by fscF and rearrangement reactions of chromene double bonds convert compound desacetylfusarochromene to fusarochromanones. Although specific acetyltransferases were not found near the fsc gene cluster, several predicted enzymes containing the N-acetyltransferase superfamily domain are present in the genome of F.equiseti. These predicted enzymes may have the potential to convert desacetylfusarochromene to fusarochromene. The polypeptide is NRPS-like oxidoreductase fscA (Fusarium equiseti (Fusarium scirpi)).